We begin with the raw amino-acid sequence, 207 residues long: Protein Nef (207 aa).

Gly2 carries the N-myristoyl glycine; by host lipid modification. Ser6 is modified (phosphoserine; by host). The acidic; interacts with host PACS1 and PACS2; stabilizes the interaction of NEF/MHC-I with host AP1M1; necessary for MHC-I internalization stretch occupies residues 62 to 66 (EESEE). An SH3-binding; interaction with Src family tyrosine kinases region spans residues 70 to 79 (PVRPQVPLRP). Residues 73–76 (PQVP) carry the PxxP; stabilizes the interaction of NEF/MHC-I with host AP1M1; necessary for MHC-I internalization motif. The segment at 109–125 (EILDLWVYNTQGIFPDW) is mediates dimerization, Nef-PTE1 interaction. Residues 149–181 (VDPQEVEEATEREDNCLLHPMCQQGMEDPERQV) form a binding to ATP6V1H region. A Dileucine internalization motif; necessary for CD4 internalization motif is present at residues 165–166 (LL). The Diacidic; necessary for CD4 internalization motif lies at 175–176 (ED).

It belongs to the lentivirus primate group Nef protein family. In terms of assembly, monomer; cytosolic form. Homodimer; membrane bound form. Interacts with Nef associated p21-activated kinase (PAK2); this interaction activates PAK2. Associates with the Nef-MHC-I-AP1 complex; this complex is required for MHC-I internalization. Interacts (via C-terminus) with host PI3-kinase. Interacts with host PACS1; this interaction seems to be weak. Interacts with host PACS2. Interacts with host LCK and MAPK3; these interactions inhibit the kinase activity of the latter. Interacts with host ATP6V1H; this interaction may play a role in CD4 endocytosis. Associates with the CD4-Nef-AP2 complex; this complex is required for CD4 internalization. Interacts with host AP2 subunit alpha and AP2 subunit sigma2. Interacts with TCR-zeta chain; this interaction up-regulates the Fas ligand (FasL) surface expression. Interacts with host HCK, LYN, and SRC; these interactions activate the Src family kinases. Interacts with MAP3K5; this interaction inhibits the Fas and TNFR-mediated death signals. Interacts with beta-COP and PTE1. Interacts with human RACK1; this increases Nef phosphorylation by PKC. Interacts with TP53; this interaction decreases the half-life of TP53, protecting the infected cell against p53-mediated apoptosis. In terms of processing, the virion-associated Nef proteins are cleaved by the viral protease to release the soluble C-terminal core protein. Nef is probably cleaved concomitantly with viral structural proteins on maturation of virus particles. Post-translationally, myristoylated. Phosphorylated on serine residues, probably by host PKCdelta and theta.

It localises to the host cell membrane. It is found in the virion. The protein localises to the secreted. The protein resides in the host Golgi apparatus membrane. Factor of infectivity and pathogenicity, required for optimal virus replication. Alters numerous pathways of T-lymphocyte function and down-regulates immunity surface molecules in order to evade host defense and increase viral infectivity. Alters the functionality of other immunity cells, like dendritic cells, monocytes/macrophages and NK cells. Its function is as follows. In infected CD4(+) T-lymphocytes, down-regulates the surface MHC-I, mature MHC-II, CD4, CD28, CCR5 and CXCR4 molecules. Mediates internalization and degradation of host CD4 through the interaction of with the cytoplasmic tail of CD4, the recruitment of AP-2 (clathrin adapter protein complex 2), internalization through clathrin coated pits, and subsequent transport to endosomes and lysosomes for degradation. Diverts host MHC-I molecules to the trans-Golgi network-associated endosomal compartments by an endocytic pathway to finally target them for degradation. MHC-I down-regulation may involve AP-1 (clathrin adapter protein complex 1) or possibly Src family kinase-ZAP70/Syk-PI3K cascade recruited by PACS2. In consequence infected cells are masked for immune recognition by cytotoxic T-lymphocytes. Decreasing the number of immune receptors also prevents reinfection by more HIV particles (superinfection). Down-regulates host SERINC3 and SERINC5 thereby excluding these proteins from the viral particles. Virion infectivity is drastically higher when SERINC3 or SERINC5 are excluded from the viral envelope, because these host antiviral proteins impair the membrane fusion event necessary for subsequent virion penetration. Functionally, bypasses host T-cell signaling by inducing a transcriptional program nearly identical to that of anti-CD3 cell activation. Interaction with TCR-zeta chain up-regulates the Fas ligand (FasL). Increasing surface FasL molecules and decreasing surface MHC-I molecules on infected CD4(+) cells send attacking cytotoxic CD8+ T-lymphocytes into apoptosis. In terms of biological role, plays a role in optimizing the host cell environment for viral replication without causing cell death by apoptosis. Protects the infected cells from apoptosis in order to keep them alive until the next virus generation is ready to strike. Inhibits the Fas and TNFR-mediated death signals by blocking MAP3K5/ASK1. Decreases the half-life of TP53, protecting the infected cell against p53-mediated apoptosis. Inhibits the apoptotic signals regulated by the Bcl-2 family proteins through the formation of a Nef/PI3-kinase/PAK2 complex that leads to activation of PAK2 and induces phosphorylation of host BAD. Extracellular Nef protein targets CD4(+) T-lymphocytes for apoptosis by interacting with CXCR4 surface receptors. This Human immunodeficiency virus type 1 group M subtype D (isolate NDK) (HIV-1) protein is Protein Nef.